The following is a 183-amino-acid chain: Tetrahydromethanopterin S-methyltransferase subunit A 2 (183 aa).

Topologically, residues Met-1–Val-101 are cytoplasmic. His-87 is a 5-hydroxybenzimidazolylcob(I)amide binding site. Residues Asp-102 to Ile-118 traverse the membrane as a helical segment. The Extracellular portion of the chain corresponds to Glu-119–Thr-183.

The protein belongs to the MtrA family. In terms of assembly, the complex is composed of 8 subunits; MtrA, MtrB, MtrC, MtrD, MtrE, MtrF, MtrG and MtrH. It depends on 5-hydroxybenzimidazolylcob(I)amide as a cofactor.

The protein resides in the cell membrane. The catalysed reaction is 5-methyl-5,6,7,8-tetrahydromethanopterin + coenzyme M + 2 Na(+)(in) = 5,6,7,8-tetrahydromethanopterin + methyl-coenzyme M + 2 Na(+)(out). Its pathway is one-carbon metabolism; methanogenesis from CO(2); methyl-coenzyme M from 5,10-methylene-5,6,7,8-tetrahydromethanopterin: step 2/2. In terms of biological role, part of a complex that catalyzes the formation of methyl-coenzyme M and tetrahydromethanopterin from coenzyme M and methyl-tetrahydromethanopterin. This is an energy-conserving, sodium-ion translocating step. In Methanothermobacter thermautotrophicus (strain ATCC 29096 / DSM 1053 / JCM 10044 / NBRC 100330 / Delta H) (Methanobacterium thermoautotrophicum), this protein is Tetrahydromethanopterin S-methyltransferase subunit A 2.